A 92-amino-acid chain; its full sequence is Large ribosomal subunit protein eL43A (92 aa).

The C4-type zinc finger occupies 39–60 (CSFCGKKTVKRGAAGIWTCSCC). S40 bears the Phosphoserine mark.

It belongs to the eukaryotic ribosomal protein eL43 family. In terms of assembly, component of the large ribosomal subunit (LSU). Mature yeast ribosomes consist of a small (40S) and a large (60S) subunit. The 40S small subunit contains 1 molecule of ribosomal RNA (18S rRNA) and 33 different proteins (encoded by 57 genes). The large 60S subunit contains 3 rRNA molecules (25S, 5.8S and 5S rRNA) and 46 different proteins (encoded by 81 genes).

The protein resides in the cytoplasm. Component of the ribosome, a large ribonucleoprotein complex responsible for the synthesis of proteins in the cell. The small ribosomal subunit (SSU) binds messenger RNAs (mRNAs) and translates the encoded message by selecting cognate aminoacyl-transfer RNA (tRNA) molecules. The large subunit (LSU) contains the ribosomal catalytic site termed the peptidyl transferase center (PTC), which catalyzes the formation of peptide bonds, thereby polymerizing the amino acids delivered by tRNAs into a polypeptide chain. The nascent polypeptides leave the ribosome through a tunnel in the LSU and interact with protein factors that function in enzymatic processing, targeting, and the membrane insertion of nascent chains at the exit of the ribosomal tunnel. The chain is Large ribosomal subunit protein eL43A from Saccharomyces cerevisiae (strain ATCC 204508 / S288c) (Baker's yeast).